The chain runs to 872 residues: DNA mismatch repair protein MutS (872 aa).

Positions 1–17 are enriched in polar residues; it reads MSISKIESVNAEKQSPV. Residues 1–22 are disordered; the sequence is MSISKIESVNAEKQSPVGTEIG. 632–639 contributes to the ATP binding site; it reads GPNMGGKS.

Belongs to the DNA mismatch repair MutS family.

Its function is as follows. This protein is involved in the repair of mismatches in DNA. It is possible that it carries out the mismatch recognition step. This protein has a weak ATPase activity. The sequence is that of DNA mismatch repair protein MutS from Azoarcus sp. (strain BH72).